The primary structure comprises 1173 residues: WASH complex subunit 4 (1173 aa).

An N-acetylalanine modification is found at A2. At S7 the chain carries Phosphoserine. Positions 27–56 (QLKNYGRFLEEYTSQLRRIEDALDDLIGDV) form a coiled coil. The sufficient for interaction with WASHC5 stretch occupies residues 705 to 1173 (KDLALFFSLN…STVSADPVVK (469 aa)). Residues 1141–1155 (AEENQEKKEKEEETK) show a composition bias toward basic and acidic residues. Residues 1141 to 1173 (AEENQEKKEKEEETKTSNGDGPESTVSADPVVK) are disordered. Phosphothreonine is present on T1154.

Belongs to the SWIP family. In terms of assembly, component of the WASH core complex also described as WASH regulatory complex (SHRC) composed of WASH (WASHC1, WASH2P or WASH3P), WASHC2 (WASHC2A or WASHC2C), WASHC3, WASHC4 and WASHC5. The WASH core complex associates via WASHC2 with the F-actin-capping protein dimer (formed by CAPZA1, CAPZA2 or CAPZA3 and CAPZB) in a transient or substoichiometric manner which was initially described as WASH complex.

It localises to the early endosome. Its function is as follows. Acts as a component of the WASH core complex that functions as a nucleation-promoting factor (NPF) at the surface of endosomes, where it recruits and activates the Arp2/3 complex to induce actin polymerization, playing a key role in the fission of tubules that serve as transport intermediates during endosome sorting. The chain is WASH complex subunit 4 from Mus musculus (Mouse).